The chain runs to 443 residues: Clustered-asparagine-rich protein (443 aa).

Residues 16-106 (TKLHIQNIPP…RNIDAKFAVP (91 aa)) form the RRM 1 domain. A disordered region spans residues 253–279 (NHLNNNNNNINNNNNNNNNNNNNNNVM). The span at 256 to 277 (NNNNNNINNNNNNNNNNNNNNN) shows a compositional bias: low complexity. The RRM 2 domain occupies 342 to 435 (SSITIMKKQN…KYLKVQLKKG (94 aa)).

In Plasmodium falciparum, this protein is Clustered-asparagine-rich protein.